The following is a 571-amino-acid chain: Glutamate--tRNA ligase (571 aa).

Positions 38-48 match the 'HIGH' region motif; sequence PSPTGFMHIGG. A 'KMSKS' region motif is present at residues 316–320; it reads KLSKR. Position 319 (Lys-319) interacts with ATP.

Belongs to the class-I aminoacyl-tRNA synthetase family. Glutamate--tRNA ligase type 1 subfamily. Monomer.

The protein localises to the cytoplasm. It carries out the reaction tRNA(Glu) + L-glutamate + ATP = L-glutamyl-tRNA(Glu) + AMP + diphosphate. Functionally, catalyzes the attachment of glutamate to tRNA(Glu) in a two-step reaction: glutamate is first activated by ATP to form Glu-AMP and then transferred to the acceptor end of tRNA(Glu). In Sorangium cellulosum (strain So ce56) (Polyangium cellulosum (strain So ce56)), this protein is Glutamate--tRNA ligase.